The following is a 352-amino-acid chain: Protein NDRG4 (352 aa).

Phosphoserine is present on residues Ser298, Ser317, and Ser323. A disordered region spans residues 301–352 (AVPSASMTRLARSRTASLTSASSVDGSRPQPCTHSDSSEGMGQVNHTMEVSC). The span at 308–323 (TRLARSRTASLTSASS) shows a compositional bias: low complexity. The segment covering 330–352 (QPCTHSDSSEGMGQVNHTMEVSC) has biased composition (polar residues).

It belongs to the NDRG family. Expressed in the brain and heart, weakly in the kidney; most prominently in postnatal brain where it is expressed widely in the olfactory bulb, cerebral cortex, hippocampus, cerebellum, thalamus, and medulla oblongata.

Its subcellular location is the cytoplasm. It is found in the cytosol. Functionally, contributes to the maintenance of intracerebral BDNF levels within the normal range, which is necessary for the preservation of spatial learning and the resistance to neuronal cell death caused by ischemic stress. May enhance growth factor-induced ERK1 and ERK2 phosphorylation, including that induced by NGF. May attenuate NGF-promoted ELK1 phosphorylation in a microtubule-dependent manner. The sequence is that of Protein NDRG4 (Ndrg4) from Rattus norvegicus (Rat).